The sequence spans 108 residues: Probable endonuclease 4 (108 aa).

Zn(2+) contacts are provided by histidine 2, histidine 36, aspartate 49, histidine 51, and glutamate 81.

This sequence belongs to the AP endonuclease 2 family. Zn(2+) serves as cofactor.

It carries out the reaction Endonucleolytic cleavage to 5'-phosphooligonucleotide end-products.. Endonuclease IV plays a role in DNA repair. It cleaves phosphodiester bonds at apurinic or apyrimidinic (AP) sites, generating a 3'-hydroxyl group and a 5'-terminal sugar phosphate. The protein is Probable endonuclease 4 (nfo) of Thermotoga neapolitana.